Here is a 216-residue protein sequence, read N- to C-terminus: Imidazole glycerol phosphate synthase subunit HisH (216 aa).

The region spanning 2–216 (RVAIIDYGSG…LIANFLKWKP (215 aa)) is the Glutamine amidotransferase type-1 domain. Catalysis depends on Cys88, which acts as the Nucleophile. Catalysis depends on residues His196 and Glu198.

As to quaternary structure, heterodimer of HisH and HisF.

The protein resides in the cytoplasm. It catalyses the reaction 5-[(5-phospho-1-deoxy-D-ribulos-1-ylimino)methylamino]-1-(5-phospho-beta-D-ribosyl)imidazole-4-carboxamide + L-glutamine = D-erythro-1-(imidazol-4-yl)glycerol 3-phosphate + 5-amino-1-(5-phospho-beta-D-ribosyl)imidazole-4-carboxamide + L-glutamate + H(+). The enzyme catalyses L-glutamine + H2O = L-glutamate + NH4(+). It participates in amino-acid biosynthesis; L-histidine biosynthesis; L-histidine from 5-phospho-alpha-D-ribose 1-diphosphate: step 5/9. In terms of biological role, IGPS catalyzes the conversion of PRFAR and glutamine to IGP, AICAR and glutamate. The HisH subunit catalyzes the hydrolysis of glutamine to glutamate and ammonia as part of the synthesis of IGP and AICAR. The resulting ammonia molecule is channeled to the active site of HisF. This chain is Imidazole glycerol phosphate synthase subunit HisH, found in Brucella suis biovar 1 (strain 1330).